The following is a 110-amino-acid chain: Ribonuclease P protein component 4 (110 aa).

Zn(2+) contacts are provided by cysteine 65, cysteine 68, cysteine 94, and cysteine 97.

Belongs to the eukaryotic/archaeal RNase P protein component 4 family. As to quaternary structure, consists of a catalytic RNA component and at least 4-5 protein subunits. Zn(2+) serves as cofactor.

It is found in the cytoplasm. The enzyme catalyses Endonucleolytic cleavage of RNA, removing 5'-extranucleotides from tRNA precursor.. Functionally, part of ribonuclease P, a protein complex that generates mature tRNA molecules by cleaving their 5'-ends. The protein is Ribonuclease P protein component 4 of Methanococcus maripaludis (strain C6 / ATCC BAA-1332).